Consider the following 214-residue polypeptide: Phosphatidylserine decarboxylase proenzyme (214 aa).

Ser182 (schiff-base intermediate with substrate; via pyruvic acid) is an active-site residue. Ser182 is modified (pyruvic acid (Ser); by autocatalysis).

This sequence belongs to the phosphatidylserine decarboxylase family. PSD-A subfamily. Heterodimer of a large membrane-associated beta subunit and a small pyruvoyl-containing alpha subunit. Pyruvate is required as a cofactor. In terms of processing, is synthesized initially as an inactive proenzyme. Formation of the active enzyme involves a self-maturation process in which the active site pyruvoyl group is generated from an internal serine residue via an autocatalytic post-translational modification. Two non-identical subunits are generated from the proenzyme in this reaction, and the pyruvate is formed at the N-terminus of the alpha chain, which is derived from the carboxyl end of the proenzyme. The post-translation cleavage follows an unusual pathway, termed non-hydrolytic serinolysis, in which the side chain hydroxyl group of the serine supplies its oxygen atom to form the C-terminus of the beta chain, while the remainder of the serine residue undergoes an oxidative deamination to produce ammonia and the pyruvoyl prosthetic group on the alpha chain.

It localises to the cell membrane. The catalysed reaction is a 1,2-diacyl-sn-glycero-3-phospho-L-serine + H(+) = a 1,2-diacyl-sn-glycero-3-phosphoethanolamine + CO2. It participates in phospholipid metabolism; phosphatidylethanolamine biosynthesis; phosphatidylethanolamine from CDP-diacylglycerol: step 2/2. In terms of biological role, catalyzes the formation of phosphatidylethanolamine (PtdEtn) from phosphatidylserine (PtdSer). The sequence is that of Phosphatidylserine decarboxylase proenzyme from Burkholderia multivorans (strain ATCC 17616 / 249).